The chain runs to 443 residues: Spermidine hydroxycinnamoyltransferase 1 (443 aa).

Active-site proton acceptor residues include His167 and Asp390.

Belongs to the plant acyltransferase family.

Functionally, hydroxycinnamoyl transferase that catalyzes the transfer of an acyl from p-coumaryol-CoA to spermidine, to produce coumaroyl spermidine. Can use feruloyl-CoA as acyl donor. Contributes to the natural variation of spermidine-based phenolamides in rice cultivars. The protein is Spermidine hydroxycinnamoyltransferase 1 of Oryza sativa subsp. japonica (Rice).